The chain runs to 615 residues: Protein PSK SIMULATOR 2 (615 aa).

A lipid anchor (N-myristoyl glycine) is attached at G2. A compositionally biased stretch (basic and acidic residues) spans 16 to 27; it reads KKLRSNDDDKSR. Disordered regions lie at residues 16-59 and 506-529; these read KKLR…KSSK and AHGV…SNTQ. A compositionally biased stretch (low complexity) spans 42-52; sequence SDSYYSDNYGG. Residues 512 to 529 show a composition bias toward polar residues; that stretch reads QETNHVSPPNNRTISNTQ.

It is found in the nucleus. In terms of biological role, promotes seedling growth probably via the regulation of phytosulfokine (PSK) signaling; PSK are peptide phytohormones acting as growth factors. Involved in PSK-induced root growth. Together with PSI1 and PSI3, required during vegetative growth and reproduction. The protein is Protein PSK SIMULATOR 2 of Arabidopsis thaliana (Mouse-ear cress).